A 241-amino-acid chain; its full sequence is Large ribosomal subunit protein uL3 (241 aa).

Disordered stretches follow at residues 140-162 (SHRSIGSTGGRQDPGKTFKNKKM) and 217-241 (PLPGKFRENGASAPATEAPAAEETA). Glutamine 151 carries the N5-methylglutamine modification. Residues 229-241 (APATEAPAAEETA) show a composition bias toward low complexity.

This sequence belongs to the universal ribosomal protein uL3 family. As to quaternary structure, part of the 50S ribosomal subunit. Forms a cluster with proteins L14 and L19. Methylated by PrmB.

Functionally, one of the primary rRNA binding proteins, it binds directly near the 3'-end of the 23S rRNA, where it nucleates assembly of the 50S subunit. The protein is Large ribosomal subunit protein uL3 of Methylobacterium radiotolerans (strain ATCC 27329 / DSM 1819 / JCM 2831 / NBRC 15690 / NCIMB 10815 / 0-1).